The following is a 364-amino-acid chain: tRNA-specific 2-thiouridylase MnmA 2 (364 aa).

ATP contacts are provided by residues 10 to 17 (GMSGGVDS) and Met36. Cys106 (nucleophile) is an active-site residue. A disulfide bridge connects residues Cys106 and Cys204. Gly130 is a binding site for ATP. The interval 154–156 (KDQ) is interaction with tRNA. Cys204 functions as the Cysteine persulfide intermediate in the catalytic mechanism. An interaction with tRNA region spans residues 310–311 (RY).

Belongs to the MnmA/TRMU family.

The protein resides in the cytoplasm. It catalyses the reaction S-sulfanyl-L-cysteinyl-[protein] + uridine(34) in tRNA + AH2 + ATP = 2-thiouridine(34) in tRNA + L-cysteinyl-[protein] + A + AMP + diphosphate + H(+). Its function is as follows. Catalyzes the 2-thiolation of uridine at the wobble position (U34) of tRNA, leading to the formation of s(2)U34. This Thermoanaerobacter pseudethanolicus (strain ATCC 33223 / 39E) (Clostridium thermohydrosulfuricum) protein is tRNA-specific 2-thiouridylase MnmA 2.